The sequence spans 387 residues: Probable peptidoglycan glycosyltransferase FtsW (387 aa).

A run of 9 helical transmembrane segments spans residues 19–39 (LDFSLYATVAILISVGIVMVA), 61–81 (ITFLAMGLVGGLVILAVPMSV), 86–106 (SGLLLILAFFLLMAVLIPGIG), 118–138 (LGPFSMQASEIAKFCLIVYFA), 161–181 (VLLIIVLLLLLEPDFGSSVVI), 199–219 (FLLLAVSGVAGLALMAVASPY), 286–306 (FIGAIALIGVFGFFLYRLVIL), 320–340 (YVVFGIGVMLAMQAFINMGVA), and 352–372 (PFISYGGSSLLITCGLMALVF).

The protein belongs to the SEDS family. FtsW subfamily.

It localises to the cell inner membrane. It carries out the reaction [GlcNAc-(1-&gt;4)-Mur2Ac(oyl-L-Ala-gamma-D-Glu-L-Lys-D-Ala-D-Ala)](n)-di-trans,octa-cis-undecaprenyl diphosphate + beta-D-GlcNAc-(1-&gt;4)-Mur2Ac(oyl-L-Ala-gamma-D-Glu-L-Lys-D-Ala-D-Ala)-di-trans,octa-cis-undecaprenyl diphosphate = [GlcNAc-(1-&gt;4)-Mur2Ac(oyl-L-Ala-gamma-D-Glu-L-Lys-D-Ala-D-Ala)](n+1)-di-trans,octa-cis-undecaprenyl diphosphate + di-trans,octa-cis-undecaprenyl diphosphate + H(+). The protein operates within cell wall biogenesis; peptidoglycan biosynthesis. Peptidoglycan polymerase that is essential for cell division. The sequence is that of Probable peptidoglycan glycosyltransferase FtsW from Saccharophagus degradans (strain 2-40 / ATCC 43961 / DSM 17024).